A 1679-amino-acid polypeptide reads, in one-letter code: Probable myosin heavy chain ECU04_1000 (1679 aa).

Residues 1-14 (MEGTTNKDIGSGSS) are compositionally biased toward polar residues. The tract at residues 1 to 22 (MEGTTNKDIGSGSSRPGGEVSV) is disordered. Residues 31–79 (MEKKWVWAPSSKEAYVCGFVVKEEGDVLEIDCRGVIVRHKSCEVFRMNP) enclose the Myosin N-terminal SH3-like domain. The region spanning 83–754 (DMVDDLAELS…VLADIEDMRD (672 aa)) is the Myosin motor domain. 176–183 (GESGAGKT) lines the ATP pocket. Residues 624-646 (LASLMSELRRTNPHFVRCIIPNL) are actin-binding. The stretch at 823–1644 (GEMKEKEAMI…SKMLEMKKKL (822 aa)) forms a coiled coil.

Belongs to the TRAFAC class myosin-kinesin ATPase superfamily. Myosin family.

In terms of biological role, cellular myosin that appears to play a role in cytokinesis, cell shape, and specialized functions such as secretion and capping. This Encephalitozoon cuniculi (strain GB-M1) (Microsporidian parasite) protein is Probable myosin heavy chain ECU04_1000.